Consider the following 217-residue polypeptide: Small ribosomal subunit protein uS3 (217 aa).

In terms of domain architecture, KH type-2 spans 40-110; that stretch reads IRDLINKGFN…EVYINIHEVR (71 aa).

It belongs to the universal ribosomal protein uS3 family. Part of the 30S ribosomal subunit. Forms a tight complex with proteins S10 and S14.

Functionally, binds the lower part of the 30S subunit head. Binds mRNA in the 70S ribosome, positioning it for translation. The sequence is that of Small ribosomal subunit protein uS3 from Rickettsia africae (strain ESF-5).